The sequence spans 445 residues: Damage suppressor protein (445 aa).

2 stretches are compositionally biased toward polar residues: residues Met1–Gly15 and Ser25–Ser47. 2 disordered regions span residues Met1 to Ile145 and Tyr203 to Lys445. Low complexity predominate over residues Ser61–Gln73. The span at Lys74 to Ser87 shows a compositional bias: polar residues. Basic and acidic residues predominate over residues Asp88–Ala97. The segment covering Asp117 to Ser138 has biased composition (low complexity). A compositionally biased stretch (basic and acidic residues) spans Val207 to Lys228. The tract at residues Gly208–Lys445 is required and sufficient for DNA-binding and co-localization with nuclear DNA. Polar residues predominate over residues Glu245–Asn256. Positions Glu257–Gly306 are enriched in low complexity. The segment covering Gly329 to Gly338 has biased composition (gly residues). The tract at residues Glu360 to Lys445 is required for nucleosome binding and for the protection of chromatin from hydroxyl radical-mediated DNA damage. The segment covering Arg367–Gly431 has biased composition (low complexity). The segment covering Ala432–Lys445 has biased composition (basic residues).

The protein resides in the nucleus. Its function is as follows. Unique chromatin-associating protein that contributes to the organism's exceptional tolerance to harsh environmental stresses. Binds with a higher affinity to nucleosomes than to free DNA. Protects chromatin from damage caused by hydroxyl radical-mediated cleavage induced by X-rays or treatment with hydrogen peroxide. Suppresses X-ray-induced DNA damage that includes single-strand breaks (SSBs) as well as more hazardous double-strand breaks (DSBs), and improves radiotolerance. Also shields DNA against reactive oxygen species (ROS). This Ramazzottius varieornatus (Water bear) protein is Damage suppressor protein.